The following is a 224-amino-acid chain: Cytidylate kinase (224 aa).

11-19 (GPAAAGKST) is a binding site for ATP.

It belongs to the cytidylate kinase family. Type 1 subfamily.

It localises to the cytoplasm. The catalysed reaction is CMP + ATP = CDP + ADP. It carries out the reaction dCMP + ATP = dCDP + ADP. This is Cytidylate kinase from Listeria monocytogenes serotype 4b (strain CLIP80459).